The sequence spans 349 residues: Bifunctional nitrilase/nitrile hydratase NIT4A (349 aa).

Residues 29–301 enclose the CN hydrolase domain; sequence VRATVVQAST…EALISADLDL (273 aa). The active-site Proton acceptor is Glu69. Lys156 is a catalytic residue. Cys190 (nucleophile) is an active-site residue.

This sequence belongs to the carbon-nitrogen hydrolase superfamily. Nitrilase family. In terms of tissue distribution, ubiquitous.

It carries out the reaction L-asparagine = 3-cyano-L-alanine + H2O. The enzyme catalyses 3-cyano-L-alanine + 2 H2O = L-aspartate + NH4(+). Its function is as follows. Involved in the cyanide detoxification pathway. Has nitrilase and nitrile-hydratase activity in the ratio 4.0:1, producing both asparagine and aspartic acid from beta-cyano-L-alanine (Ala(CN)). Can also use 3-phenylpropionitrile as substrate, but not indole-3-acetonitrile. The chain is Bifunctional nitrilase/nitrile hydratase NIT4A (NIT4A) from Lupinus angustifolius (Narrow-leaved blue lupine).